Consider the following 356-residue polypeptide: tRNA N6-adenosine threonylcarbamoyltransferase (356 aa).

The Fe cation site is built by histidine 115 and histidine 119. Residues 138–142 (LVSGG), aspartate 171, glycine 184, and asparagine 283 each bind substrate. Aspartate 311 is a Fe cation binding site.

It belongs to the KAE1 / TsaD family. Fe(2+) serves as cofactor.

Its subcellular location is the cytoplasm. It catalyses the reaction L-threonylcarbamoyladenylate + adenosine(37) in tRNA = N(6)-L-threonylcarbamoyladenosine(37) in tRNA + AMP + H(+). In terms of biological role, required for the formation of a threonylcarbamoyl group on adenosine at position 37 (t(6)A37) in tRNAs that read codons beginning with adenine. Is involved in the transfer of the threonylcarbamoyl moiety of threonylcarbamoyl-AMP (TC-AMP) to the N6 group of A37, together with TsaE and TsaB. TsaD likely plays a direct catalytic role in this reaction. The sequence is that of tRNA N6-adenosine threonylcarbamoyltransferase from Prochlorococcus marinus (strain AS9601).